The chain runs to 271 residues: Tryptophan synthase alpha chain (271 aa).

Residues Glu49 and Asp60 each act as proton acceptor in the active site.

It belongs to the TrpA family. Tetramer of two alpha and two beta chains.

It catalyses the reaction (1S,2R)-1-C-(indol-3-yl)glycerol 3-phosphate + L-serine = D-glyceraldehyde 3-phosphate + L-tryptophan + H2O. The protein operates within amino-acid biosynthesis; L-tryptophan biosynthesis; L-tryptophan from chorismate: step 5/5. Its function is as follows. The alpha subunit is responsible for the aldol cleavage of indoleglycerol phosphate to indole and glyceraldehyde 3-phosphate. The sequence is that of Tryptophan synthase alpha chain from Yersinia pestis bv. Antiqua (strain Angola).